The primary structure comprises 732 residues: Aldehyde oxidoreductase molybdenum-binding subunit PaoC (732 aa).

Mo-molybdopterin cytosine dinucleotide contacts are provided by residues 241–242 (GF), 468–470 (IGT), 511–512 (GA), 615–621 (RILNPKT), Gln625, and 688–691 (KGVG). The Proton acceptor role is filled by Glu692.

Belongs to the xanthine dehydrogenase family. Heterotrimer composed of PaoA, PaoB and PaoC. Mo-molybdopterin cytosine dinucleotide is required as a cofactor.

The protein resides in the periplasm. The catalysed reaction is an aldehyde + A + H2O = a carboxylate + AH2 + H(+). Functionally, oxidizes aldehydes to the corresponding carboxylic acids with a preference for aromatic aldehydes. It might play a role in the detoxification of aldehydes to avoid cell damage. This is Aldehyde oxidoreductase molybdenum-binding subunit PaoC from Escherichia coli O157:H7.